We begin with the raw amino-acid sequence, 90 residues long: DNA-binding protein HU (90 aa).

Belongs to the bacterial histone-like protein family. As to quaternary structure, homodimer.

Histone-like DNA-binding protein which is capable of wrapping DNA to stabilize it, and thus to prevent its denaturation under extreme environmental conditions. The sequence is that of DNA-binding protein HU (hup) from Staphylococcus aureus (strain COL).